A 320-amino-acid polypeptide reads, in one-letter code: MTTTVSTGATAVATLRETSPPVDGHEEARLNADSDDGSHGSQDPGKMFIGGLSWQTTAENLRDYFGRFGEVNECMVMRDPATKRARGFGFITFVDPSSVDKVLNNREHELDGKKIDPKVAFPKRTQAKLVTKTKKVFIGGLSATSTLEDMKQYFETYGKVEDAMLMFDKATQRHRGFGFVTFDSDEVADKVCEIHFHEINGKMVECKKAQPKEVMLPVQLNKSRAAAARNLYGMPPETLLAYAQYLPRFGGNLMYPNFTNVFNNMPGGYSGLSTPGGSSNRPPHQFDTASLYSLNNGGQLLDSQAQMFMNQQSYHSHSKY.

Positions 1-14 (MTTTVSTGATAVAT) are enriched in low complexity. Residues 1–48 (MTTTVSTGATAVATLRETSPPVDGHEEARLNADSDDGSHGSQDPGKMF) are disordered. Threonine 18 is subject to Phosphothreonine. A phosphoserine mark is found at serine 19 and serine 34. Positions 23–38 (DGHEEARLNADSDDGS) are enriched in basic and acidic residues. RRM domains are found at residues 45 to 124 (GKMF…FPKR) and 134 to 211 (KKVF…KAQP). Required for binding to target mRNAs stretches follow at residues 88-93 (FGFITF) and 177-182 (FGFVTF).

It belongs to the Musashi family. In terms of tissue distribution, expressed in the gut and in AVA, AFD, RMD, RMED, RMEV, RMER and RMEL neurons (at protein level). In the tail expressed in neurons and all the ray sensilla. Expressed in male specific C1-C4 neurons.

Its subcellular location is the cytoplasm. The protein localises to the perikaryon. RNA binding protein that regulates the expression of target mRNAs at the translation level. Binds RNA containing the 5'-[GA]U(1-3)AGU-3' motif located in the 3' UTR of the target mRNA. Binds to the mRNA of three Arp2/3 complex components arx-1, arx-2 and arx-3 and negatively regulates their translation during association learning. Plays a role in time-dependent memory loss and the retention of conditioned behavior over time, probably through negative regulation of the Arp2/3 actin cytoskeleton branching complex and regulation of synapse size. Required for two aspects of male mating behavior: turning around the hermaphrodite head or tail and vulva location. This Caenorhabditis elegans protein is RNA-binding protein Musashi homolog 1.